The primary structure comprises 347 residues: Bombesin receptor-activated protein C6orf89 homolog (347 aa).

Topologically, residues 1-58 (MDLAANEISIYDKLSETVDLVRQTGHQCGMSEKAIEKFIRQLLEKNEPQRPPPQYPLL) are cytoplasmic. The chain crosses the membrane as a helical span at residues 59-79 (IVVYKVLATLGLILLTAYFVI). The Extracellular segment spans residues 80–347 (QPFSPLAPEP…ICDGTAFSEL (268 aa)).

As to quaternary structure, homodimer. Interacts with BRS3. Interacts (via N-terminus) with SIN3B. Glycosylated.

The protein resides in the golgi apparatus membrane. It localises to the cytoplasm. Exhibits histone deacetylase (HDAC) enhancer properties. May play a role in cell cycle progression and wound repair of bronchial epithelial cells. This chain is Bombesin receptor-activated protein C6orf89 homolog, found in Pongo abelii (Sumatran orangutan).